Reading from the N-terminus, the 241-residue chain is Ribonuclease HII (241 aa).

The RNase H type-2 domain maps to 27 to 227; the sequence is GPVAGVDEAG…REARSLRLED (201 aa). Residues Asp-33, Glu-34, and Asp-128 each coordinate a divalent metal cation.

This sequence belongs to the RNase HII family. Requires Mn(2+) as cofactor. The cofactor is Mg(2+).

The protein localises to the cytoplasm. The catalysed reaction is Endonucleolytic cleavage to 5'-phosphomonoester.. In terms of biological role, endonuclease that specifically degrades the RNA of RNA-DNA hybrids. The chain is Ribonuclease HII from Frankia alni (strain DSM 45986 / CECT 9034 / ACN14a).